A 187-amino-acid chain; its full sequence is Phosphatidylethanolamine-binding protein 1 (187 aa).

Residues Ser6 and Ser13 each carry the phosphoserine modification. Thr42 carries the phosphothreonine modification. A phosphoserine mark is found at Ser52 and Ser98. The interaction with RAF1 stretch occupies residues 93-134 (KGGNISSGTVLSDYVGSGPPKGTGLHRYVWLVYEQDGPLKCD).

It belongs to the phosphatidylethanolamine-binding protein family. Has a tendency to form dimers by disulfide cross-linking. Interacts with RAF1 and this interaction is enhanced if RAF1 is phosphorylated on residues 'Ser-338', 'Ser-339', 'Tyr-340' and 'Tyr-341'. Interacts with ALOX15; in response to IL13/interleukin-13, prevents the interaction of PEBP1 with RAF1 to activate the ERK signaling cascade.

The protein resides in the cytoplasm. Its function is as follows. Binds ATP, opioids and phosphatidylethanolamine. Has lower affinity for phosphatidylinositol and phosphatidylcholine. Serine protease inhibitor which inhibits thrombin, neuropsin and chymotrypsin but not trypsin, tissue type plasminogen activator and elastase. Inhibits the kinase activity of RAF1 by inhibiting its activation and by dissociating the RAF1/MEK complex and acting as a competitive inhibitor of MEK phosphorylation. Functionally, HCNP may be involved in the function of the presynaptic cholinergic neurons of the central nervous system. HCNP increases the production of choline acetyltransferase but not acetylcholinesterase. Seems to be mediated by a specific receptor. The polypeptide is Phosphatidylethanolamine-binding protein 1 (PEBP1) (Oryctolagus cuniculus (Rabbit)).